Consider the following 564-residue polypeptide: NAD-dependent malic enzyme (564 aa).

Catalysis depends on tyrosine 104, which acts as the Proton donor. Arginine 157 serves as a coordination point for NAD(+). Catalysis depends on lysine 175, which acts as the Proton acceptor. A divalent metal cation contacts are provided by glutamate 246, aspartate 247, and aspartate 270. Residues aspartate 270 and asparagine 417 each contribute to the NAD(+) site.

Belongs to the malic enzymes family. Homotetramer. The cofactor is Mg(2+). It depends on Mn(2+) as a cofactor.

It carries out the reaction (S)-malate + NAD(+) = pyruvate + CO2 + NADH. The catalysed reaction is oxaloacetate + H(+) = pyruvate + CO2. This chain is NAD-dependent malic enzyme, found in Aeromonas hydrophila subsp. hydrophila (strain ATCC 7966 / DSM 30187 / BCRC 13018 / CCUG 14551 / JCM 1027 / KCTC 2358 / NCIMB 9240 / NCTC 8049).